The primary structure comprises 691 residues: Elongation factor G (691 aa).

One can recognise a tr-type G domain in the interval 12–286; the sequence is KKLRNIGIMA…GVLEYLPSPL (275 aa). GTP-binding positions include 21-28, 85-89, and 139-142; these read AHIDAGKT, DTPGH, and NKMD.

Belongs to the TRAFAC class translation factor GTPase superfamily. Classic translation factor GTPase family. EF-G/EF-2 subfamily.

It localises to the cytoplasm. Its function is as follows. Catalyzes the GTP-dependent ribosomal translocation step during translation elongation. During this step, the ribosome changes from the pre-translocational (PRE) to the post-translocational (POST) state as the newly formed A-site-bound peptidyl-tRNA and P-site-bound deacylated tRNA move to the P and E sites, respectively. Catalyzes the coordinated movement of the two tRNA molecules, the mRNA and conformational changes in the ribosome. This chain is Elongation factor G, found in Thermosipho melanesiensis (strain DSM 12029 / CIP 104789 / BI429).